A 235-amino-acid polypeptide reads, in one-letter code: MPSARDILQQGLDRLGSPEDLASRIDSTLLSPRATEEDVRNLVREASDYGFRCAVLTPVYTVKISGLAEKLGVKLCSVIGFPLGQAPLEVKLVEAQTVLEAGATELDVVPHLSLGPEAVYREVSGIVKLAKSYGAVVKVILEAPLWDDKTLSLLVDSSRRAGADIVKTSTGVYTKGGDPVTVFRLASLAKPLGMGVKASGGIRSGIDAVLAVGAGADIIGTSSAVKVLESFKSLV.

D107 acts as the Proton donor/acceptor in catalysis. K167 serves as the catalytic Schiff-base intermediate with acetaldehyde. K197 functions as the Proton donor/acceptor in the catalytic mechanism.

Belongs to the DeoC/FbaB aldolase family. DeoC type 1 subfamily. Homotetramer.

The protein localises to the cytoplasm. The catalysed reaction is 2-deoxy-D-ribose 5-phosphate = D-glyceraldehyde 3-phosphate + acetaldehyde. It participates in carbohydrate degradation; 2-deoxy-D-ribose 1-phosphate degradation; D-glyceraldehyde 3-phosphate and acetaldehyde from 2-deoxy-alpha-D-ribose 1-phosphate: step 2/2. In terms of biological role, catalyzes a reversible aldol reaction between acetaldehyde and D-glyceraldehyde 3-phosphate to generate 2-deoxy-D-ribose 5-phosphate. In Aeropyrum pernix (strain ATCC 700893 / DSM 11879 / JCM 9820 / NBRC 100138 / K1), this protein is Deoxyribose-phosphate aldolase.